A 331-amino-acid polypeptide reads, in one-letter code: 4-hydroxy-3-methylbut-2-enyl diphosphate reductase (331 aa).

Cysteine 12 is a [4Fe-4S] cluster binding site. Positions 43 and 81 each coordinate (2E)-4-hydroxy-3-methylbut-2-enyl diphosphate. Dimethylallyl diphosphate-binding residues include histidine 43 and histidine 81. Isopentenyl diphosphate is bound by residues histidine 43 and histidine 81. Cysteine 103 serves as a coordination point for [4Fe-4S] cluster. Residue histidine 131 participates in (2E)-4-hydroxy-3-methylbut-2-enyl diphosphate binding. Histidine 131 lines the dimethylallyl diphosphate pocket. Histidine 131 provides a ligand contact to isopentenyl diphosphate. Glutamate 133 functions as the Proton donor in the catalytic mechanism. Threonine 170 is a (2E)-4-hydroxy-3-methylbut-2-enyl diphosphate binding site. Residue cysteine 198 coordinates [4Fe-4S] cluster. 3 residues coordinate (2E)-4-hydroxy-3-methylbut-2-enyl diphosphate: serine 226, asparagine 228, and serine 271. Positions 226, 228, and 271 each coordinate dimethylallyl diphosphate. Positions 226, 228, and 271 each coordinate isopentenyl diphosphate.

This sequence belongs to the IspH family. Requires [4Fe-4S] cluster as cofactor.

It carries out the reaction isopentenyl diphosphate + 2 oxidized [2Fe-2S]-[ferredoxin] + H2O = (2E)-4-hydroxy-3-methylbut-2-enyl diphosphate + 2 reduced [2Fe-2S]-[ferredoxin] + 2 H(+). The enzyme catalyses dimethylallyl diphosphate + 2 oxidized [2Fe-2S]-[ferredoxin] + H2O = (2E)-4-hydroxy-3-methylbut-2-enyl diphosphate + 2 reduced [2Fe-2S]-[ferredoxin] + 2 H(+). It participates in isoprenoid biosynthesis; dimethylallyl diphosphate biosynthesis; dimethylallyl diphosphate from (2E)-4-hydroxy-3-methylbutenyl diphosphate: step 1/1. The protein operates within isoprenoid biosynthesis; isopentenyl diphosphate biosynthesis via DXP pathway; isopentenyl diphosphate from 1-deoxy-D-xylulose 5-phosphate: step 6/6. Functionally, catalyzes the conversion of 1-hydroxy-2-methyl-2-(E)-butenyl 4-diphosphate (HMBPP) into a mixture of isopentenyl diphosphate (IPP) and dimethylallyl diphosphate (DMAPP). Acts in the terminal step of the DOXP/MEP pathway for isoprenoid precursor biosynthesis. The protein is 4-hydroxy-3-methylbut-2-enyl diphosphate reductase of Listeria monocytogenes serovar 1/2a (strain ATCC BAA-679 / EGD-e).